Consider the following 145-residue polypeptide: Probable inactive ribonuclease-like protein 12 (145 aa).

Residues 1–19 (MVLMVVVFLLLLFWENELT) form the signal peptide.

Belongs to the pancreatic ribonuclease family.

Its subcellular location is the secreted. Its function is as follows. Does not exhibit any ribonuclease activity. The polypeptide is Probable inactive ribonuclease-like protein 12 (Rnase12) (Mus musculus (Mouse)).